Consider the following 374-residue polypeptide: Dual-specificity RNA methyltransferase RlmN (374 aa).

Glutamate 91 serves as the catalytic Proton acceptor. One can recognise a Radical SAM core domain in the interval 97 to 340 (EDDRGTLCIS…TTVRKTRGDD (244 aa)). Cysteines 104 and 345 form a disulfide. [4Fe-4S] cluster is bound by residues cysteine 111, cysteine 115, and cysteine 118. Residues 165-166 (GE), serine 197, 219-221 (SLH), and asparagine 302 contribute to the S-adenosyl-L-methionine site. The active-site S-methylcysteine intermediate is the cysteine 345.

It belongs to the radical SAM superfamily. RlmN family. [4Fe-4S] cluster serves as cofactor.

It is found in the cytoplasm. It catalyses the reaction adenosine(2503) in 23S rRNA + 2 reduced [2Fe-2S]-[ferredoxin] + 2 S-adenosyl-L-methionine = 2-methyladenosine(2503) in 23S rRNA + 5'-deoxyadenosine + L-methionine + 2 oxidized [2Fe-2S]-[ferredoxin] + S-adenosyl-L-homocysteine. It carries out the reaction adenosine(37) in tRNA + 2 reduced [2Fe-2S]-[ferredoxin] + 2 S-adenosyl-L-methionine = 2-methyladenosine(37) in tRNA + 5'-deoxyadenosine + L-methionine + 2 oxidized [2Fe-2S]-[ferredoxin] + S-adenosyl-L-homocysteine. Its function is as follows. Specifically methylates position 2 of adenine 2503 in 23S rRNA and position 2 of adenine 37 in tRNAs. m2A2503 modification seems to play a crucial role in the proofreading step occurring at the peptidyl transferase center and thus would serve to optimize ribosomal fidelity. The chain is Dual-specificity RNA methyltransferase RlmN from Acidovorax sp. (strain JS42).